Reading from the N-terminus, the 186-residue chain is Dirigent protein 7 (186 aa).

The first 21 residues, 1–21 (MAKLILIIVTQILLIAAVVSA), serve as a signal peptide directing secretion. N-linked (GlcNAc...) asparagine glycans are attached at residues N70, N91, and N126.

Belongs to the plant dirigent protein family. In terms of assembly, homodimer.

Its subcellular location is the secreted. It localises to the extracellular space. The protein localises to the apoplast. Its function is as follows. Dirigent proteins impart stereoselectivity on the phenoxy radical-coupling reaction, yielding optically active lignans from two molecules of coniferyl alcohol in the biosynthesis of lignans, flavonolignans, and alkaloids and thus plays a central role in plant secondary metabolism. In Arabidopsis thaliana (Mouse-ear cress), this protein is Dirigent protein 7 (DIR7).